The primary structure comprises 154 residues: MKTLSLKPSEIEKKWILIDADGLVLGRLASQIAMRLRGKHKPTYTPHMDCGDNVIVINAEKVKLTGNKRQDDIFYWHTGYPGGIKGRSKGQILDGRFPERVIIKAVERMVPRGPLGRRQMGNLRVYAGTAHPHEAQQPEVLDVAAMNPKNKRSA.

It belongs to the universal ribosomal protein uL13 family. In terms of assembly, part of the 50S ribosomal subunit.

Its function is as follows. This protein is one of the early assembly proteins of the 50S ribosomal subunit, although it is not seen to bind rRNA by itself. It is important during the early stages of 50S assembly. The chain is Large ribosomal subunit protein uL13 from Rhodospirillum centenum (strain ATCC 51521 / SW).